The primary structure comprises 361 residues: NudC domain-containing protein 3 (361 aa).

Residues 87 to 97 are compositionally biased toward basic and acidic residues; that stretch reads KIRRKEEEEAK. Residues 87-106 are disordered; the sequence is KIRRKEEEEAKTVSAAAAEK. Position 146 is a phosphoserine (S146). The CS domain maps to 185 to 277; the sequence is AVRENYTWSQ…VGEYWWNAIL (93 aa). Phosphoserine is present on residues S340 and S355.

This Pongo abelii (Sumatran orangutan) protein is NudC domain-containing protein 3 (NUDCD3).